We begin with the raw amino-acid sequence, 597 residues long: Arginine--tRNA ligase (597 aa).

Residues 138 to 148 (ANPTGPMHVGH) carry the 'HIGH' region motif.

The protein belongs to the class-I aminoacyl-tRNA synthetase family. Monomer.

The protein localises to the cytoplasm. It catalyses the reaction tRNA(Arg) + L-arginine + ATP = L-arginyl-tRNA(Arg) + AMP + diphosphate. The polypeptide is Arginine--tRNA ligase (Rhodopseudomonas palustris (strain ATCC BAA-98 / CGA009)).